A 146-amino-acid chain; its full sequence is Protein SprT-like (146 aa).

A SprT-like domain is found at 4–142; sequence NEYVKQVSLE…GRCKGKLRLL (139 aa). H64 is a binding site for Zn(2+). Residue E65 is part of the active site. Zn(2+) is bound at residue H68.

The protein belongs to the SprT family. Zn(2+) is required as a cofactor.

It is found in the cytoplasm. The sequence is that of Protein SprT-like from Streptococcus gordonii (strain Challis / ATCC 35105 / BCRC 15272 / CH1 / DL1 / V288).